The following is a 1413-amino-acid chain: Sushi, nidogen and EGF-like domain-containing protein 1 (1413 aa).

The N-terminal stretch at 1-24 (MRHGVAWALLVAAALGLGARGVRG) is a signal peptide. Positions 103–258 (AFWADVDNRR…GRWAFRIDDA (156 aa)) constitute an NIDO domain. Asn145 and Asn204 each carry an N-linked (GlcNAc...) asparagine glycan. EGF-like domains lie at 268–309 (TTSV…RRCH), 311–347 (DVNE…PTCE), and 349–385 (AQSP…AACE). 18 cysteine pairs are disulfide-bonded: Cys272-Cys284, Cys278-Cys297, Cys299-Cys308, Cys315-Cys326, Cys320-Cys335, Cys337-Cys346, Cys353-Cys364, Cys358-Cys373, Cys375-Cys384, Cys391-Cys402, Cys396-Cys411, Cys413-Cys422, Cys433-Cys444, Cys438-Cys453, Cys455-Cys464, Cys472-Cys480, Cys474-Cys488, and Cys490-Cys499. Asn292 is a glycosylation site (N-linked (GlcNAc...) asparagine). A Follistatin-like 1 domain is found at 352–374 (PCDTKECQHGGQCQVENGSAVCV). Asn368 carries N-linked (GlcNAc...) asparagine glycosylation. The EGF-like 4; calcium-binding domain maps to 387 to 423 (DVDDCSPDPCLNGGSCVDLVGNYTCLCAEPFKGLRCE). A glycan (N-linked (GlcNAc...) asparagine) is linked at Asn408. EGF-like domains are found at residues 429-465 (VPDA…LDCR) and 468-500 (VPDD…LLCE). Residue Asn484 is glycosylated (N-linked (GlcNAc...) asparagine). Residues 507-530 (PCNMNTQCPDGGYCMEHGGSYLCV) form the Follistatin-like 2 domain. N-linked (GlcNAc...) asparagine glycosylation is present at Asn536. EGF-like domains are found at residues 541 to 577 (LPSP…KHCE), 580 to 616 (RPHL…RHCE), 619 to 655 (KPDS…RHCE), and 657 to 693 (APSP…RRCQ). Disulfide bonds link Cys545/Cys556, Cys550/Cys565, Cys567/Cys576, Cys584/Cys595, Cys589/Cys604, Cys606/Cys615, Cys623/Cys634, Cys628/Cys643, Cys645/Cys654, Cys661/Cys672, Cys666/Cys681, Cys683/Cys692, Cys698/Cys739, Cys724/Cys751, Cys757/Cys768, Cys762/Cys777, Cys779/Cys788, Cys795/Cys806, Cys800/Cys815, Cys817/Cys826, Cys833/Cys844, Cys838/Cys853, Cys855/Cys864, Cys871/Cys882, Cys876/Cys891, and Cys893/Cys902. The region spanning 696 to 753 (VDCGPPEEVKHATLRFNGTRLGAVALYACDRGYSLSAPSRIRVCQPHGVWSEPPQCLE) is the Sushi domain. Asn712 carries N-linked (GlcNAc...) asparagine glycosylation. Residues 753–789 (EIDECRSQPCLHGGSCQDRVAGYLCLCSTGYEGAHCE) form the EGF-like 11; calcium-binding domain. One can recognise an EGF-like 12; calcium-binding domain in the interval 791 to 827 (ERDECRAHPCRNGGSCRNLPGAYVCRCPAGFVGVHCE). 2 consecutive EGF-like domains span residues 829-865 (EVDA…YHCE) and 867-903 (VSDP…EDCA). N-linked (GlcNAc...) asparagine glycosylation occurs at Asn886. 3 consecutive Fibronectin type-III domains span residues 908 to 1006 (PPTA…TRPR), 1007 to 1105 (PVEG…TRPL), and 1106 to 1200 (PPAN…SPRD). 4 N-linked (GlcNAc...) asparagine glycosylation sites follow: Asn977, Asn1015, Asn1109, and Asn1139. A disordered region spans residues 1206 to 1226 (WHQGGHHPRVLKNRPPPARLP). Residues 1207–1217 (HQGGHHPRVLK) are compositionally biased toward basic residues. One can recognise an EGF-like 15 domain in the interval 1307 to 1343 (VPGNCSENPCQNGGTCVPGADAHSCDCGPGFKGRRCE). Asn1310 carries an N-linked (GlcNAc...) asparagine glycan. 3 disulfides stabilise this stretch: Cys1311–Cys1322, Cys1316–Cys1331, and Cys1333–Cys1342. A disordered region spans residues 1394-1413 (TSLKKTPNRKQSKSQTLEKS).

In terms of processing, phosphorylated on serine and threonine residues. N-glycosylated.

The protein resides in the secreted. It localises to the extracellular space. The protein localises to the extracellular matrix. This Homo sapiens (Human) protein is Sushi, nidogen and EGF-like domain-containing protein 1.